Consider the following 222-residue polypeptide: CEACAM1-like protein UL7 (222 aa).

Residues Asn-50, Asn-56, Asn-60, Asn-71, Asn-105, Asn-109, Asn-125, Asn-132, Asn-147, Asn-164, Asn-168, and Asn-189 are each glycosylated (N-linked (GlcNAc...) asparagine; by host). Residues 193–213 (LALVGVVVFLVLIVVCIMGWW) form a helical membrane-spanning segment.

Belongs to the RL11 family. In terms of processing, highly glycosylated.

The protein resides in the secreted. It localises to the host cell membrane. Plays a role in modulating the host immune response and affecting host cytokine production. Structurally and functionally homolog of host CEACAM1, induces endothelial cell angiogenesis. This Homo sapiens (Human) protein is CEACAM1-like protein UL7 (UL7).